The following is a 992-amino-acid chain: UPF0182 protein Mb3215c (992 aa).

7 consecutive transmembrane segments (helical) span residues 17 to 39, 59 to 81, 113 to 135, 169 to 191, 212 to 229, 255 to 277, and 284 to 306; these read RILIMIALGVIVLLLAGPRLIDA, LATRIVVCLVAGVVVGGIVFGGL, LVGIGIPAAIGLLAGIVAQSYWA, LMLSYMLVSVFLAFVANLVAHYI, LVSLVGVLVLLKAVAYWL, VLPAKLILMAIALICAAAVFSAI, and IPAIGLVLLLLSSLIVGAGWPLI. Residues 906–938 form a disordered region; it reads PTEAAVPPSPAANPPPPASGPQPPPVTAAPPVP. The segment covering 912-938 has biased composition (pro residues); the sequence is PPSPAANPPPPASGPQPPPVTAAPPVP.

This sequence belongs to the UPF0182 family.

It localises to the cell membrane. The sequence is that of UPF0182 protein Mb3215c from Mycobacterium bovis (strain ATCC BAA-935 / AF2122/97).